We begin with the raw amino-acid sequence, 162 residues long: N5-carboxyaminoimidazole ribonucleotide mutase (162 aa).

Ser-11, Asp-14, and Arg-41 together coordinate substrate.

It belongs to the AIR carboxylase family. Class I subfamily.

It catalyses the reaction 5-carboxyamino-1-(5-phospho-D-ribosyl)imidazole + H(+) = 5-amino-1-(5-phospho-D-ribosyl)imidazole-4-carboxylate. Its pathway is purine metabolism; IMP biosynthesis via de novo pathway; 5-amino-1-(5-phospho-D-ribosyl)imidazole-4-carboxylate from 5-amino-1-(5-phospho-D-ribosyl)imidazole (N5-CAIR route): step 2/2. Catalyzes the conversion of N5-carboxyaminoimidazole ribonucleotide (N5-CAIR) to 4-carboxy-5-aminoimidazole ribonucleotide (CAIR). This is N5-carboxyaminoimidazole ribonucleotide mutase from Brucella melitensis biotype 1 (strain ATCC 23456 / CCUG 17765 / NCTC 10094 / 16M).